We begin with the raw amino-acid sequence, 468 residues long: N-acyl-phosphatidylethanolamine-hydrolyzing phospholipase D, mitochondrial (468 aa).

The N-terminal 39 residues, 1–39, are a transit peptide targeting the mitochondrion; that stretch reads MNFVTCHVQMRLLLQRRLVRLRESELFRPQTSLSTFKRH. A helical transmembrane segment spans residues 54-76; that stretch reads YARILLLSVLVPYTGYAFYVSLA. Positions 265, 267, 269, 270, 332, and 425 each coordinate Zn(2+).

Belongs to the NAPE-PLD family. Zn(2+) serves as cofactor.

The protein localises to the mitochondrion membrane. The enzyme catalyses an N-acyl-1,2-diacyl-sn-glycero-3-phosphoethanolamine + H2O = an N-acylethanolamine + a 1,2-diacyl-sn-glycero-3-phosphate + H(+). Its function is as follows. Hydrolyzes N-acyl-phosphatidylethanolamines (NAPEs) to produce N-acylethanolamines (NAEs). The chain is N-acyl-phosphatidylethanolamine-hydrolyzing phospholipase D, mitochondrial (FMP30) from Saccharomyces cerevisiae (strain ATCC 204508 / S288c) (Baker's yeast).